A 307-amino-acid chain; its full sequence is Ribosomal protein L11 methyltransferase (307 aa).

Residues Thr-154, Gly-178, Asp-200, and Asn-242 each coordinate S-adenosyl-L-methionine.

Belongs to the methyltransferase superfamily. PrmA family.

It is found in the cytoplasm. The enzyme catalyses L-lysyl-[protein] + 3 S-adenosyl-L-methionine = N(6),N(6),N(6)-trimethyl-L-lysyl-[protein] + 3 S-adenosyl-L-homocysteine + 3 H(+). In terms of biological role, methylates ribosomal protein L11. In Syntrophotalea carbinolica (strain DSM 2380 / NBRC 103641 / GraBd1) (Pelobacter carbinolicus), this protein is Ribosomal protein L11 methyltransferase.